The sequence spans 271 residues: MFPYVTDYSGFAIRKWMIDNVDVAGFLCLLYLGLVWKGPGVVKSLREKNLINATLLQGVFIMWNLFLSTFSVIGMIVVVPAAIAHISNKGLVPALCERDVNMIYDSPVGFWVGVFALSKIPELFDTVLLVLQGKQPPFLHWYHHTTVLIFSWQSYCEGSSTIFVFVAMNLTVHAVMYFYFAMCASGFKAIMRTIAPVITIMQILQMIVGSAVTMYSAYVLYNPQPDGPQTCDVTKASARMGVVMYLSYLYLFAALFVESYLKPKKRTEKSK.

The helical transmembrane segment at 16–36 threads the bilayer; that stretch reads WMIDNVDVAGFLCLLYLGLVW. N-linked (GlcNAc...) asparagine glycosylation occurs at Asn52. 2 helical membrane passes run 59–79 and 110–130; these read VFIMWNLFLSTFSVIGMIVVV and FWVGVFALSKIPELFDTVLLV. The HxxHH motif motif lies at 140-144; it reads HWYHH. Catalysis depends on His143, which acts as the Nucleophile. The next 3 helical transmembrane spans lie at 162–182, 194–214, and 241–261; these read IFVFVAMNLTVHAVMYFYFAM, IAPVITIMQILQMIVGSAVTM, and GVVMYLSYLYLFAALFVESYL.

Belongs to the ELO family.

It localises to the endoplasmic reticulum membrane. The catalysed reaction is an acyl-CoA + malonyl-CoA + H(+) = a 3-oxoacyl-CoA + CO2 + CoA. It participates in lipid metabolism; fatty acid biosynthesis. In terms of biological role, involved in the synthesis of fatty acids. Elongates C10 fatty acids to C14. The chain is Fatty acid elongase 2 from Trypanosoma brucei brucei (strain 927/4 GUTat10.1).